The following is a 307-amino-acid chain: Olfactory receptor 8K5 (307 aa).

Over 1 to 25 (MGQHNLTVLTEFILMELTRRPELQI) the chain is Extracellular. Asn5 is a glycosylation site (N-linked (GlcNAc...) asparagine). The chain crosses the membrane as a helical span at residues 26–46 (PLFGVFLVIYLITVVGNLTMI). Residues 47 to 54 (ILTKLDSH) are Cytoplasmic-facing. Residues 55–75 (LHTPMYFSIRHLAFVDLGNST) traverse the membrane as a helical segment. At 76 to 99 (VICPKVLANFVVDRNTISYYACAA) the chain is on the extracellular side. Cys97 and Cys189 are disulfide-bonded. A helical membrane pass occupies residues 100–120 (QLAFFLMFIISEFFILSAMAY). Topologically, residues 121–139 (DRYVAICNPLLYYVIMSQR) are cytoplasmic. A helical membrane pass occupies residues 140–160 (LCHVLVGIQYLYSTFQALMFT). At 161 to 197 (IKIFTLTFCGSNVISHFYCDDVPLLPMLCSNAQEIEL) the chain is on the extracellular side. The helical transmembrane segment at 198–217 (LSILFSVFNLISSFLIVLVS) threads the bilayer. Over 218-237 (YMLILLAICQMHSAEGRKKA) the chain is Cytoplasmic. A helical transmembrane segment spans residues 238–258 (FSTCGSHLTVVVVFYGSLLFM). Topologically, residues 259 to 271 (YMQPNSTHFFDTD) are extracellular. A glycan (N-linked (GlcNAc...) asparagine) is linked at Asn263. A helical transmembrane segment spans residues 272–292 (KMASVFYTLVIPMLNPLIYSL). The Cytoplasmic portion of the chain corresponds to 293–307 (RNEEVKNAFYKLFEN).

It belongs to the G-protein coupled receptor 1 family.

Its subcellular location is the cell membrane. Its function is as follows. Odorant receptor. This Homo sapiens (Human) protein is Olfactory receptor 8K5 (OR8K5).